A 171-amino-acid polypeptide reads, in one-letter code: Small ribosomal subunit protein uS5 (171 aa).

The region spanning 15-78 is the S5 DRBM domain; sequence YEEKVVKIKR…EKAKKQLIRI (64 aa).

The protein belongs to the universal ribosomal protein uS5 family. Part of the 30S ribosomal subunit. Contacts proteins S4 and S8.

Its function is as follows. With S4 and S12 plays an important role in translational accuracy. Located at the back of the 30S subunit body where it stabilizes the conformation of the head with respect to the body. In Phytoplasma australiense, this protein is Small ribosomal subunit protein uS5.